A 122-amino-acid chain; its full sequence is Large ribosomal subunit protein uL14 (122 aa).

The protein belongs to the universal ribosomal protein uL14 family. As to quaternary structure, part of the 50S ribosomal subunit. Forms a cluster with proteins L3 and L19. In the 70S ribosome, L14 and L19 interact and together make contacts with the 16S rRNA in bridges B5 and B8.

In terms of biological role, binds to 23S rRNA. Forms part of two intersubunit bridges in the 70S ribosome. This Bacillus anthracis (strain A0248) protein is Large ribosomal subunit protein uL14.